The primary structure comprises 376 residues: Putative dihydroorotase (376 aa).

Zn(2+) is bound by residues histidine 35 and histidine 37. Residues 37 to 39 (HVR) and asparagine 66 each bind substrate. Positions 114, 138, and 187 each coordinate Zn(2+). Residue asparagine 230 coordinates substrate. Aspartate 257 provides a ligand contact to Zn(2+). Aspartate 257 is a catalytic residue. Substrate contacts are provided by residues histidine 261 and 273-274 (YG).

The protein belongs to the metallo-dependent hydrolases superfamily. DHOase family. Class I DHOase subfamily. Requires Zn(2+) as cofactor.

The catalysed reaction is (S)-dihydroorotate + H2O = N-carbamoyl-L-aspartate + H(+). It functions in the pathway pyrimidine metabolism; UMP biosynthesis via de novo pathway; (S)-dihydroorotate from bicarbonate: step 3/3. Its function is as follows. Catalyzes the reversible cyclization of carbamoyl aspartate to dihydroorotate. In Thermotoga maritima (strain ATCC 43589 / DSM 3109 / JCM 10099 / NBRC 100826 / MSB8), this protein is Putative dihydroorotase (pyrC).